Reading from the N-terminus, the 257-residue chain is UPF0246 protein BF3795 (257 aa).

This sequence belongs to the UPF0246 family.

The protein is UPF0246 protein BF3795 of Bacteroides fragilis (strain ATCC 25285 / DSM 2151 / CCUG 4856 / JCM 11019 / LMG 10263 / NCTC 9343 / Onslow / VPI 2553 / EN-2).